Reading from the N-terminus, the 259-residue chain is Probable metal transport system ATP-binding protein TC_0339 (259 aa).

The ABC transporter domain occupies 9-241; the sequence is WAVDDLCVNY…AIFQAYGCEL (233 aa). Residue 41-48 participates in ATP binding; that stretch reads GPNGAGKS.

Belongs to the ABC transporter superfamily.

It localises to the cell inner membrane. Its function is as follows. Part of an ATP-driven transport system TC_0338/TC_0339/TC_0341/TC_0342 for a metal. Probably responsible for energy coupling to the transport system. In Chlamydia muridarum (strain MoPn / Nigg), this protein is Probable metal transport system ATP-binding protein TC_0339.